Here is a 738-residue protein sequence, read N- to C-terminus: Vesicle-fusing ATPase (738 aa).

ATP is bound by residues 507 to 512 (NGIINY) and 547 to 554 (PGCGKSSL).

This sequence belongs to the AAA ATPase family. Interacts with syn7A, snpA and snpC. It depends on Mg(2+) as a cofactor.

The protein localises to the cytoplasmic vesicle membrane. It localises to the endosome membrane. It catalyses the reaction ATP + H2O = ADP + phosphate + H(+). Its function is as follows. Required for vesicle-mediated transport. Involved in endocytosis and endosome-endosome fusion. May be required for transport from the endoplasmic reticulum to the Golgi stack, and for the fusion of transport vesicles within the Golgi cisternae. Required for cell polarity, locomotion and chemotaxis. The protein is Vesicle-fusing ATPase (nsfA) of Dictyostelium discoideum (Social amoeba).